The primary structure comprises 97 residues: YcgL domain-containing protein PFL_1496 (97 aa).

Residues 3–87 (RICSIYKSPR…AEDEYIEHLP (85 aa)) form the YcgL domain.

This chain is YcgL domain-containing protein PFL_1496, found in Pseudomonas fluorescens (strain ATCC BAA-477 / NRRL B-23932 / Pf-5).